Here is a 225-residue protein sequence, read N- to C-terminus: Cytidylate kinase (225 aa).

11–19 (GPAGVGKST) is a binding site for ATP.

Belongs to the cytidylate kinase family. Type 1 subfamily.

The protein localises to the cytoplasm. It carries out the reaction CMP + ATP = CDP + ADP. The enzyme catalyses dCMP + ATP = dCDP + ADP. The chain is Cytidylate kinase from Lawsonia intracellularis (strain PHE/MN1-00).